Consider the following 435-residue polypeptide: Light-independent protochlorophyllide reductase subunit N (435 aa).

3 residues coordinate [4Fe-4S] cluster: Cys23, Cys48, and Cys108.

The protein belongs to the BchN/ChlN family. Protochlorophyllide reductase is composed of three subunits; ChlL, ChlN and ChlB. Forms a heterotetramer of two ChlB and two ChlN subunits. It depends on [4Fe-4S] cluster as a cofactor.

It is found in the plastid. Its subcellular location is the chloroplast. The enzyme catalyses chlorophyllide a + oxidized 2[4Fe-4S]-[ferredoxin] + 2 ADP + 2 phosphate = protochlorophyllide a + reduced 2[4Fe-4S]-[ferredoxin] + 2 ATP + 2 H2O. Its pathway is porphyrin-containing compound metabolism; chlorophyll biosynthesis (light-independent). Its function is as follows. Component of the dark-operative protochlorophyllide reductase (DPOR) that uses Mg-ATP and reduced ferredoxin to reduce ring D of protochlorophyllide (Pchlide) to form chlorophyllide a (Chlide). This reaction is light-independent. The NB-protein (ChlN-ChlB) is the catalytic component of the complex. The chain is Light-independent protochlorophyllide reductase subunit N from Auxenochlorella protothecoides (Green microalga).